The primary structure comprises 746 residues: MGNINKKLFYFLIQLITILIVLSDDSYNSLLPLEKDIAVIIRDLSPQTNPDFEIDNPNRVIKGLVKDQLNEEDRSPIYCCGDDHAPNIDRNRFVIHNQSTFYSWFHNQKDVNIVISKSLVFTRNVTSDDPRIYSYESDNFFPIDKMGFEADSYNGPIKKNQWKDRWGFPRNFHFCLELHASFFYIGGELFSFKGDDDVWVFIDNRLVLDLGAPHDVSGQNGQGSVYLDNLGLEKSKSYNFDFFYCERHTTDSHIMVETSIDFKCKYYDYCGVCEGMGKCCNPSECYGSLPACGHFECPGLTDIAPNVDWRYHCKVVVPNCSLSDTFCVKHQCDPDSKQCVPSTDYQPCQGKSNSSCIEARCDDKMGGCYLKSKPKDQSKNDTTCYRETCNEDTSTWEYKALCEDDSDKCISKKCIPNSGCSSSVVDCNDNNHCTIDSCSKDTGCIHDPIENCVPCVEGNKCSESSDKCQQLECNPYNSTTECIDRTKKNCDDSNACTIDTCNGESGECENTPKQCLAKNKCSTARCNSKTGQCDNIYHCDDGILCTLDKCSENGTCYYEANPCDDGDQCTIDICLNTLTETGGCSHSARVCEPKNSCFTSHCDKKLGCVQTPIECPVEAFCLISFCDNSTKKCMTADRPCIPDDPRCQYGVCDNDTKACIFKDYDPLPFKCQSAAVKAAVGVGAGAAAGIAIGGAIALGLAAFGGKRGYDAWKSSRDNQIQTSSENPLYNPNPNQGDNPLYAANNS.

An N-terminal signal peptide occupies residues 1–23 (MGNINKKLFYFLIQLITILIVLS). Residues 24–679 (DDSYNSLLPL…KCQSAAVKAA (656 aa)) are Extracellular-facing. Residues asparagine 97 and asparagine 124 are each glycosylated (N-linked (GlcNAc...) asparagine). In terms of domain architecture, PA14 spans 125–276 (VTSDDPRIYS…YDYCGVCEGM (152 aa)). Residues asparagine 319, asparagine 353, asparagine 380, asparagine 477, asparagine 553, asparagine 628, and asparagine 654 are each glycosylated (N-linked (GlcNAc...) asparagine). A helical membrane pass occupies residues 680–700 (VGVGAGAAAGIAIGGAIALGL). The Cytoplasmic portion of the chain corresponds to 701 to 746 (AAFGGKRGYDAWKSSRDNQIQTSSENPLYNPNPNQGDNPLYAANNS). Positions 714-746 (SSRDNQIQTSSENPLYNPNPNQGDNPLYAANNS) are disordered. A compositionally biased stretch (polar residues) spans 717–746 (DNQIQTSSENPLYNPNPNQGDNPLYAANNS).

Belongs to the prespore-cell-inducing factor family.

It is found in the membrane. In Dictyostelium discoideum (Social amoeba), this protein is Protein psiN (psiN).